The following is a 142-amino-acid chain: NTF2-related export protein 2 (142 aa).

Positions 17–136 constitute an NTF2 domain; sequence AAEEFVNIYY…WKIASDCFRF (120 aa).

In terms of assembly, associates with NXF1, NXF2, NXF3 and NXF5.

It is found in the nucleus. The protein resides in the cytoplasm. Its function is as follows. Regulator of protein export for NES-containing proteins. Also plays a role in mRNA nuclear export. The polypeptide is NTF2-related export protein 2 (NXT2) (Bos taurus (Bovine)).